The primary structure comprises 321 residues: Cytochrome f (321 aa).

The signal sequence occupies residues 1 to 38; that stretch reads MKKNFYTISKTMSRSLKLILFSVFIGFSIFLIPQPTWA. 4 residues coordinate heme: Tyr39, Cys59, Cys62, and His63. The chain crosses the membrane as a helical span at residues 288–308; sequence VIGMIIFFIGVGLSQIMLVLK.

The protein belongs to the cytochrome f family. The 4 large subunits of the cytochrome b6-f complex are cytochrome b6, subunit IV (17 kDa polypeptide, PetD), cytochrome f and the Rieske protein, while the 4 small subunits are PetG, PetL, PetM and PetN. The complex functions as a dimer. Heme is required as a cofactor.

It is found in the cellular thylakoid membrane. In terms of biological role, component of the cytochrome b6-f complex, which mediates electron transfer between photosystem II (PSII) and photosystem I (PSI), cyclic electron flow around PSI, and state transitions. This Prochlorococcus marinus (strain NATL2A) protein is Cytochrome f.